Reading from the N-terminus, the 304-residue chain is uncharacterized protein (304 aa).

A signal peptide spans 1–22 (MKKSLTLLILLLCSLLFSTVLS). The interval 91–111 (PAPAPTPESSDPDEPMKPDDS) is disordered. Asn133, Asn160, Asn183, and Asn233 each carry an N-linked (GlcNAc...) asparagine glycan. Residue Ser282 is the site of GPI-anchor amidated serine attachment. Residues 283–304 (SSHLFGVLPFLPLVLCIFLFLL) constitute a propeptide, removed in mature form.

Its subcellular location is the cell membrane. This is an uncharacterized protein from Arabidopsis thaliana (Mouse-ear cress).